The chain runs to 292 residues: MSMPATSTKTTKLATSLIDEYALLGWRAMLTEVNLSPKPGLVDRINCGAHKDMALEDFHRSALAIQGWLPRFIEFGACSAEMAPEAVLHGLRPIGMACEGDMFRATAGVNTHKGSIFSLGLLCAAIGRLLQLNQSLTPTTVCSTAASFCRGLTDRELRTNNSQLTAGQRLYQQLALTGARGEAEAGYPLVINHALPHYLTLLDQGLDPELALLDTLLLLMAINGDTNVASRGGEGGLRWLQREAQTLLQKGGIRTLADLDYLRQFDRECIERNLSPGGSADLLILTWFLAQI.

Belongs to the CitG/MdcB family.

The catalysed reaction is 3'-dephospho-CoA + ATP = 2'-(5''-triphospho-alpha-D-ribosyl)-3'-dephospho-CoA + adenine. The polypeptide is Probable 2-(5''-triphosphoribosyl)-3'-dephosphocoenzyme-A synthase (Shigella boydii serotype 18 (strain CDC 3083-94 / BS512)).